A 65-amino-acid chain; its full sequence is Protein YSY6 (65 aa).

Residues 45–65 (LGILLFLLVGGGVLQLISYIL) form a helical membrane-spanning segment.

It belongs to the RAMP4 family.

Its subcellular location is the membrane. The protein resides in the endoplasmic reticulum membrane. In terms of biological role, interacts with target proteins during their translocation into the lumen of the endoplasmic reticulum. Protects unfolded target proteins against degradation during ER stress. May facilitate glycosylation of target proteins after termination of ER stress. The chain is Protein YSY6 (YSY6) from Saccharomyces cerevisiae (strain ATCC 204508 / S288c) (Baker's yeast).